Here is a 389-residue protein sequence, read N- to C-terminus: Migration and invasion-inhibitory protein (389 aa).

Positions 44-54 are enriched in low complexity; it reads LDYSSSSNNLE. Disordered stretches follow at residues 44–80 and 131–150; these read LDYSSSSNNLEMPLSQETSASSVAPNSQDKRHVWDPL and KRPVSLGGPKGLGPDKAQVP. The span at 58 to 70 shows a compositional bias: polar residues; sequence SQETSASSVAPNS. The span at 71-80 shows a compositional bias: basic and acidic residues; sequence QDKRHVWDPL. At S309 the chain carries Phosphoserine.

As to quaternary structure, interacts with IGFBP2.

Inhibits glioma cells invasion and down-regulates adhesion- and motility-associated genes such as NFKB2 and ICAM1. Exhibits opposing effects to IGFBP2 on cell invasion. The sequence is that of Migration and invasion-inhibitory protein (Miip) from Rattus norvegicus (Rat).